The following is a 321-amino-acid chain: Serine/threonine-protein phosphatase 4 catalytic subunit 2 (321 aa).

Mn(2+)-binding residues include Asp64, His66, Asp92, and Asn124. His125 acts as the Proton donor in catalysis. Mn(2+) contacts are provided by His174 and His249.

The protein belongs to the PPP phosphatase family. PP-4 (PP-X) subfamily. Serine/threonine-protein phosphatase 4 (PP4) occurs in different assemblies of the catalytic and one or more regulatory subunits. It depends on Mn(2+) as a cofactor.

It carries out the reaction O-phospho-L-seryl-[protein] + H2O = L-seryl-[protein] + phosphate. The catalysed reaction is O-phospho-L-threonyl-[protein] + H2O = L-threonyl-[protein] + phosphate. Its function is as follows. Protein phosphatase which seems to be involved in larval development but not essential for embryogenesis. In Caenorhabditis elegans, this protein is Serine/threonine-protein phosphatase 4 catalytic subunit 2.